Here is a 90-residue protein sequence, read N- to C-terminus: UPF0297 protein BH1268 (90 aa).

It belongs to the UPF0297 family.

The polypeptide is UPF0297 protein BH1268 (Halalkalibacterium halodurans (strain ATCC BAA-125 / DSM 18197 / FERM 7344 / JCM 9153 / C-125) (Bacillus halodurans)).